The sequence spans 356 residues: Zinc finger protein 830 (356 aa).

Positions 11–33 form a coiled coil; the sequence is AQEELRKLMKAKQRESSSKKRIE. The C2H2-type zinc-finger motif lies at 47–69; sequence CVVCNSLIKSELLWPAHILGKQH. The interval 71-195 is disordered; that stretch reads EKVAELKGTK…PTSSADNLPA (125 aa). A compositionally biased stretch (polar residues) spans 80 to 90; it reads KATTSSPSNTI. Composition is skewed to basic and acidic residues over residues 99-118 and 125-135; these read KGSE…EDHP and LPEEFFEKEKT. Residues 150–165 show a composition bias toward acidic residues; sequence DYEDVDDDDAEEGEEY. The stretch at 278 to 322 forms a coiled coil; sequence AEEDEEGRLDRQIDEIDEQIQCYRRVEHLRDRKDTLQDAKMEVLK.

Its subcellular location is the nucleus. The protein localises to the chromosome. It localises to the nucleus speckle. May act as an important regulator of the cell cycle that participates in the maintenance of genome integrity. In Xenopus laevis (African clawed frog), this protein is Zinc finger protein 830.